Reading from the N-terminus, the 288-residue chain is Protoheme IX farnesyltransferase (288 aa).

The next 9 membrane-spanning stretches (helical) occupy residues 16-36, 37-57, 88-108, 111-131, 138-158, 162-182, 210-230, 236-256, and 265-285; these read VWSL…PYFN, LHYI…SMGA, INGL…LAAF, LYAA…YSYL, WNII…WYTV, FSIL…IHVW, AICI…PAFF, VYMI…IVFV, and LKLF…VLIF.

It belongs to the UbiA prenyltransferase family. Protoheme IX farnesyltransferase subfamily.

It is found in the cell membrane. The catalysed reaction is heme b + (2E,6E)-farnesyl diphosphate + H2O = Fe(II)-heme o + diphosphate. It functions in the pathway porphyrin-containing compound metabolism; heme O biosynthesis; heme O from protoheme: step 1/1. Functionally, converts heme B (protoheme IX) to heme O by substitution of the vinyl group on carbon 2 of heme B porphyrin ring with a hydroxyethyl farnesyl side group. The polypeptide is Protoheme IX farnesyltransferase (Thermoplasma acidophilum (strain ATCC 25905 / DSM 1728 / JCM 9062 / NBRC 15155 / AMRC-C165)).